The sequence spans 277 residues: Lectin 1 (277 aa).

An N-terminal signal peptide occupies residues 1–30; the sequence is MSFSSSNFYVILSISLTVFILLFNINKVNS. Asparagine 143 carries N-linked (GlcNAc...) asparagine glycosylation. Positions 152 and 154 each coordinate Mn(2+). Ca(2+) is bound by residues aspartate 154, asparagine 158, and aspartate 161. Mn(2+) contacts are provided by aspartate 161 and histidine 167. Asparagine 269 carries N-linked (GlcNAc...) asparagine glycosylation.

The protein belongs to the leguminous lectin family.

Its function is as follows. Lectin that may be involved in a cell recognition process. The protein is Lectin 1 (LEC1) of Medicago truncatula (Barrel medic).